The primary structure comprises 425 residues: ATP-dependent RNA helicase eIF4A (425 aa).

A Q motif motif is present at residues 38–66 (DTWEDYGLKEDLLKGIYSIGFETPSFIQK). The Helicase ATP-binding domain occupies 69–241 (IQPIIDGRDI…EEILINPVII (173 aa)). 82–89 (AQSGTGKT) contributes to the ATP binding site. Residues 187–190 (DEAD) carry the DEAD box motif. The 174-residue stretch at 252 to 425 (GIRQYFIDLR…KELPADFSFQ (174 aa)) folds into the Helicase C-terminal domain.

Belongs to the DEAD box helicase family. eIF4A subfamily. As to quaternary structure, component of the eIF4F complex, which composition varies with external and internal environmental conditions. It is composed of at least eIF4A, eIF4E and eIF4G.

The protein resides in the cytoplasm. The catalysed reaction is ATP + H2O = ADP + phosphate + H(+). ATP-dependent RNA helicase which is a subunit of the eIF4F complex involved in cap recognition and is required for mRNA binding to ribosome. In the current model of translation initiation, eIF4A unwinds RNA secondary structures in the 5'-UTR of mRNAs which is necessary to allow efficient binding of the small ribosomal subunit, and subsequent scanning for the initiator codon. This is ATP-dependent RNA helicase eIF4A (TIF1) from Encephalitozoon cuniculi (strain GB-M1) (Microsporidian parasite).